Here is a 330-residue protein sequence, read N- to C-terminus: MQGSVTEFLKPRLVDIEQISTTHAKVTLEPLERGFGHTLGNALRRILLSSMPGCAVTEVEIEGVLHEYSTKEGVQEDILEILLNLKGLAVRVAEGKDEVFITLNKSGSGPVVAGDITHDGDVEIVNPEHVICHLTSDNAAIAMRIKVERGRGYVPASARIHTEEDERPIGRLLVDATFSPVDKIAYSVEAARVEQRTDLDKLVIDMETNGTLEPEEAIRRAATILAEQLDAFVDLRDVRVPEEKEEKPEFDPILLRPVDDLELTVRSANCLKAEAIHYIGDLVQRTEVELLKTPNLGKKSLTEIKDVLASRGLSLGMRLENWPPASIAED.

An alpha N-terminal domain (alpha-NTD) region spans residues 1 to 236 (MQGSVTEFLK…EQLDAFVDLR (236 aa)). The alpha C-terminal domain (alpha-CTD) stretch occupies residues 250–330 (FDPILLRPVD…NWPPASIAED (81 aa)).

Belongs to the RNA polymerase alpha chain family. As to quaternary structure, homodimer. The RNAP catalytic core consists of 2 alpha, 1 beta, 1 beta' and 1 omega subunit. When a sigma factor is associated with the core the holoenzyme is formed, which can initiate transcription.

The enzyme catalyses RNA(n) + a ribonucleoside 5'-triphosphate = RNA(n+1) + diphosphate. Functionally, DNA-dependent RNA polymerase catalyzes the transcription of DNA into RNA using the four ribonucleoside triphosphates as substrates. The sequence is that of DNA-directed RNA polymerase subunit alpha from Vibrio cholerae serotype O1 (strain ATCC 39315 / El Tor Inaba N16961).